A 185-amino-acid polypeptide reads, in one-letter code: Elongation factor P (185 aa).

This sequence belongs to the elongation factor P family.

The protein localises to the cytoplasm. It functions in the pathway protein biosynthesis; polypeptide chain elongation. In terms of biological role, involved in peptide bond synthesis. Stimulates efficient translation and peptide-bond synthesis on native or reconstituted 70S ribosomes in vitro. Probably functions indirectly by altering the affinity of the ribosome for aminoacyl-tRNA, thus increasing their reactivity as acceptors for peptidyl transferase. This Streptococcus uberis (strain ATCC BAA-854 / 0140J) protein is Elongation factor P.